We begin with the raw amino-acid sequence, 366 residues long: NADH-quinone oxidoreductase subunit D (366 aa).

The protein belongs to the complex I 49 kDa subunit family. In terms of assembly, NDH-1 is composed of 14 different subunits. Subunits NuoB, C, D, E, F, and G constitute the peripheral sector of the complex.

The protein localises to the cell membrane. The enzyme catalyses a quinone + NADH + 5 H(+)(in) = a quinol + NAD(+) + 4 H(+)(out). Its function is as follows. NDH-1 shuttles electrons from NADH, via FMN and iron-sulfur (Fe-S) centers, to quinones in the respiratory chain. The immediate electron acceptor for the enzyme in this species is believed to be a menaquinone. Couples the redox reaction to proton translocation (for every two electrons transferred, four hydrogen ions are translocated across the cytoplasmic membrane), and thus conserves the redox energy in a proton gradient. This chain is NADH-quinone oxidoreductase subunit D, found in Geobacillus thermodenitrificans (strain NG80-2).